The following is an 89-amino-acid chain: Small ribosomal subunit protein uS15 (89 aa).

The protein belongs to the universal ribosomal protein uS15 family. In terms of assembly, part of the 30S ribosomal subunit. Forms a bridge to the 50S subunit in the 70S ribosome, contacting the 23S rRNA.

One of the primary rRNA binding proteins, it binds directly to 16S rRNA where it helps nucleate assembly of the platform of the 30S subunit by binding and bridging several RNA helices of the 16S rRNA. Its function is as follows. Forms an intersubunit bridge (bridge B4) with the 23S rRNA of the 50S subunit in the ribosome. This Thiobacillus denitrificans (strain ATCC 25259 / T1) protein is Small ribosomal subunit protein uS15.